The sequence spans 1076 residues: Guanylyl cyclase C (1076 aa).

Positions 1–23 (MKSPLLGLVVWSLLLQLLQPGLA) are cleaved as a signal peptide. Over 24-433 (FWNSQISQNC…PHDIPGLGPH (410 aa)) the chain is Extracellular. Residues asparagine 35, asparagine 82, asparagine 191, asparagine 198, asparagine 287, asparagine 306, asparagine 310, asparagine 348, and asparagine 405 are each glycosylated (N-linked (GlcNAc...) asparagine). The helical transmembrane segment at 434-457 (ILLIAVCTLAGVVVLILLIALLVL) threads the bilayer. Residues 458–1076 (RKYKKDNELR…NTTDQDSTYF (619 aa)) are Cytoplasmic-facing. The region spanning 492 to 752 (LKIDDDKKRD…KIENTLAKIF (261 aa)) is the Protein kinase domain. The Guanylate cyclase domain maps to 827–957 (TVYFSDIVGF…DTVNTASRME (131 aa)).

This sequence belongs to the adenylyl cyclase class-4/guanylyl cyclase family. As to quaternary structure, homotrimer. Interacts via its C-terminal region with NHERF4. Interacts with the lectin chaperone VIP36. Glycosylation at Asn-62 is required for interaction with VIP36 while glycosylation at Asn-348 and Asn-405 modulates ligand-mediated GC-C activation.

The protein localises to the cell membrane. The protein resides in the endoplasmic reticulum membrane. It carries out the reaction GTP = 3',5'-cyclic GMP + diphosphate. Guanylyl cyclase that catalyzes synthesis of cyclic GMP (cGMP) from GTP. This Cavia porcellus (Guinea pig) protein is Guanylyl cyclase C (GUCY2C).